The sequence spans 912 residues: Effector protein hopAE1 (912 aa).

The span at 1–13 shows a compositional bias: polar residues; that stretch reads MMPSQITRSSHSS. The disordered stretch occupies residues 1–32; it reads MMPSQITRSSHSSLPEVAPASGDATGVSEQTP.

It belongs to the HopW family.

The protein resides in the secreted. This is Effector protein hopAE1 (hopAE1) from Pseudomonas savastanoi pv. phaseolicola (strain 1448A / Race 6) (Pseudomonas syringae pv. phaseolicola (strain 1448A / Race 6)).